An 86-amino-acid chain; its full sequence is Putative pro-MCH-like protein 2 (86 aa).

Residues G31–E49 form an NGE-like region. The disordered stretch occupies residues G40–A60. An NEI-like region spans residues E52–I64. Residues D68–V86 form a melanin-concentrating hormone-like region.

Belongs to the melanin-concentrating hormone family. In terms of tissue distribution, expressed in testis but not in brain.

The protein is Putative pro-MCH-like protein 2 (PMCHL2) of Homo sapiens (Human).